Consider the following 141-residue polypeptide: Transcriptional regulator MraZ (141 aa).

2 SpoVT-AbrB domains span residues Glu5–Glu47 and Ala75–Arg118.

This sequence belongs to the MraZ family. In terms of assembly, forms oligomers.

It is found in the cytoplasm. It localises to the nucleoid. The sequence is that of Transcriptional regulator MraZ from Lachnoclostridium phytofermentans (strain ATCC 700394 / DSM 18823 / ISDg) (Clostridium phytofermentans).